The primary structure comprises 856 residues: DNA endonuclease RBBP8 (856 aa).

The tract at residues 25–48 (ELWSKLKECHDKDLQELLMKIGKL) is essential for binding to the MRN complex and for RPA focus formation on DNA damage. Coiled-coil stretches lie at residues 38–87 (LQEL…EDRL) and 120–141 (ITEL…SEQL). Disordered stretches follow at residues 143 to 174 (DMQK…DSPL) and 423 to 456 (DSEQ…DKEN). The segment covering 156–168 (ENPADTGDGEDGV) has biased composition (acidic residues). Residues 493–515 (SSSRTKLTISLVPEKPDTKTILH) form a damage-recruitment motif region. The tract at residues 695–732 (SPSQSISCKERSDIPSIENKKITSEKEHESKGEPYQKQ) is disordered. Residues 702-730 (CKERSDIPSIENKKITSEKEHESKGEPYQ) show a composition bias toward basic and acidic residues. At threonine 806 the chain carries Phosphothreonine. Threonine 818 bears the Phosphothreonine; by ATR mark.

Belongs to the COM1/SAE2/CtIP family. Homotetramer; formed by antiparallel association of helical extensions protruding from the N-termini of two parallel coiled-coil dimers. Interacts with the MRN complex; the interaction links DNA sensing to resection. Interacts with samhd1. Phosphorylation at Thr-818 by atr promotes recruitment to double-strand breaks (DSBs).

Its subcellular location is the nucleus. It is found in the chromosome. In terms of biological role, endonuclease that cooperates with the MRE11-RAD50-NBN (MRN) complex in DNA-end resection, the first step of double-strand break (DSB) repair through the homologous recombination (HR) pathway. Functions downstream of the MRN complex and ATM, promotes ATR activation and its recruitment to DSBs in the S/G2 phase facilitating the generation of ssDNA. Specifically promotes the endonuclease activity of the MRN complex to clear DNA ends containing protein adducts: recruited to DSBs by nbn following phosphorylation, and promotes the endonuclease of mre11 to clear protein-DNA adducts and generate clean double-strand break ends. The MRN complex and rbbp8/CtIP are also required for chromosome alignment during metaphase. The sequence is that of DNA endonuclease RBBP8 (rbbp8) from Xenopus laevis (African clawed frog).